A 389-amino-acid polypeptide reads, in one-letter code: Succinate--CoA ligase [ADP-forming] subunit beta (389 aa).

The ATP-grasp domain occupies 9 to 236 (KELFASHGVP…KDAEDPLEAK (228 aa)). Residues Lys-45, 52-54 (GRG), Ser-94, and Glu-99 each bind ATP. Residues Asn-191 and Asp-205 each contribute to the Mg(2+) site. Residues Asn-256 and 318-320 (GIT) each bind substrate.

This sequence belongs to the succinate/malate CoA ligase beta subunit family. In terms of assembly, heterotetramer of two alpha and two beta subunits. Mg(2+) is required as a cofactor.

The enzyme catalyses succinate + ATP + CoA = succinyl-CoA + ADP + phosphate. It catalyses the reaction GTP + succinate + CoA = succinyl-CoA + GDP + phosphate. Its pathway is carbohydrate metabolism; tricarboxylic acid cycle; succinate from succinyl-CoA (ligase route): step 1/1. Succinyl-CoA synthetase functions in the citric acid cycle (TCA), coupling the hydrolysis of succinyl-CoA to the synthesis of either ATP or GTP and thus represents the only step of substrate-level phosphorylation in the TCA. The beta subunit provides nucleotide specificity of the enzyme and binds the substrate succinate, while the binding sites for coenzyme A and phosphate are found in the alpha subunit. The polypeptide is Succinate--CoA ligase [ADP-forming] subunit beta (Saccharopolyspora erythraea (strain ATCC 11635 / DSM 40517 / JCM 4748 / NBRC 13426 / NCIMB 8594 / NRRL 2338)).